The sequence spans 130 residues: Holo-[acyl-carrier-protein] synthase (130 aa).

Residues aspartate 8 and glutamate 62 each coordinate Mg(2+).

It belongs to the P-Pant transferase superfamily. AcpS family. Mg(2+) serves as cofactor.

The protein resides in the cytoplasm. It carries out the reaction apo-[ACP] + CoA = holo-[ACP] + adenosine 3',5'-bisphosphate + H(+). In terms of biological role, transfers the 4'-phosphopantetheine moiety from coenzyme A to a Ser of acyl-carrier-protein. The sequence is that of Holo-[acyl-carrier-protein] synthase from Polynucleobacter asymbioticus (strain DSM 18221 / CIP 109841 / QLW-P1DMWA-1) (Polynucleobacter necessarius subsp. asymbioticus).